A 232-amino-acid polypeptide reads, in one-letter code: Phosphoribosylaminoimidazole-succinocarboxamide synthase (232 aa).

This sequence belongs to the SAICAR synthetase family.

The catalysed reaction is 5-amino-1-(5-phospho-D-ribosyl)imidazole-4-carboxylate + L-aspartate + ATP = (2S)-2-[5-amino-1-(5-phospho-beta-D-ribosyl)imidazole-4-carboxamido]succinate + ADP + phosphate + 2 H(+). It participates in purine metabolism; IMP biosynthesis via de novo pathway; 5-amino-1-(5-phospho-D-ribosyl)imidazole-4-carboxamide from 5-amino-1-(5-phospho-D-ribosyl)imidazole-4-carboxylate: step 1/2. This is Phosphoribosylaminoimidazole-succinocarboxamide synthase from Finegoldia magna (strain ATCC 29328 / DSM 20472 / WAL 2508) (Peptostreptococcus magnus).